The sequence spans 243 residues: Sarcospan (243 aa).

The tract at residues 1–43 (MGKNKQPRGQQRQGGPPAADAAGPDDMEPKKGTGAPKECGEEE) is disordered. The Cytoplasmic segment spans residues 1 to 53 (MGKNKQPRGQQRQGGPPAADAAGPDDMEPKKGTGAPKECGEEEPRTCCGCRFP). A compositionally biased stretch (low complexity) spans 7-24 (PRGQQRQGGPPAADAAGP). Residues 54-74 (LLLALLQLALGIAVTVVGFLM) traverse the membrane as a helical segment. The Extracellular segment spans residues 75-86 (ASISSSLLVRDT). Residues 87–107 (PFWAGIIVCLVAYLGLFMLCV) form a helical membrane-spanning segment. Over 108–122 (SYQVDERTCIQFSMK) the chain is Cytoplasmic. A helical membrane pass occupies residues 123 to 143 (LLYFLLSALGLTVCVLAVAFA). At 144–193 (AHHYSQLTQFTCETTLDSCQCKLPSSEPLSRTFVYRDVTDCTSVTGTFKL) the chain is on the extracellular side. Residues 194-214 (FLLIQMILNLVCGLVCLLACF) traverse the membrane as a helical segment. At 215–243 (VMWKHRYQVFYVGVRICSLTASEGPQQKI) the chain is on the cytoplasmic side.

Isoform 1 is expressed exclusively in heart and skeletal muscle. Isoform 2 is expressed in heart, skeletal muscle, thymus, prostate, testis, ovary, small intestine, colon and spleen.

It localises to the cell membrane. Its subcellular location is the sarcolemma. It is found in the postsynaptic cell membrane. In terms of biological role, component of the dystrophin-glycoprotein complex (DGC), a complex that spans the muscle plasma membrane and forms a link between the F-actin cytoskeleton and the extracellular matrix. Preferentially associates with the sarcoglycan subcomplex of the DGC. The chain is Sarcospan (SSPN) from Homo sapiens (Human).